Here is a 447-residue protein sequence, read N- to C-terminus: Diaminopimelate decarboxylase (447 aa).

Lys-72 bears the N6-(pyridoxal phosphate)lysine mark. Pyridoxal 5'-phosphate-binding positions include Gly-258 and Glu-300–Arg-303. Arg-303, Arg-344, and Tyr-348 together coordinate substrate. Catalysis depends on Cys-375, which acts as the Proton donor. Residues Glu-376 and Tyr-405 each contribute to the substrate site. Tyr-405 is a binding site for pyridoxal 5'-phosphate.

It belongs to the Orn/Lys/Arg decarboxylase class-II family. LysA subfamily. As to quaternary structure, homodimer. Requires pyridoxal 5'-phosphate as cofactor.

It catalyses the reaction meso-2,6-diaminopimelate + H(+) = L-lysine + CO2. It functions in the pathway amino-acid biosynthesis; L-lysine biosynthesis via DAP pathway; L-lysine from DL-2,6-diaminopimelate: step 1/1. In terms of biological role, specifically catalyzes the decarboxylation of meso-diaminopimelate (meso-DAP) to L-lysine. In Mycobacterium bovis (strain ATCC BAA-935 / AF2122/97), this protein is Diaminopimelate decarboxylase.